A 151-amino-acid polypeptide reads, in one-letter code: HTH-type transcriptional regulator FL11 (151 aa).

The region spanning 5–66 (LDEIDKKIIK…IIDPEALGYS (62 aa)) is the HTH asnC-type domain. Residues 24–43 (LREISKITGLAESTIHERIR) constitute a DNA-binding region (H-T-H motif). 98 to 104 (ETTGDYD) serves as a coordination point for L-arginine. L-lysine-binding positions include Asn-118, Asp-122, and 133–135 (THT). Residues Asp-122 and 133–135 (THT) each bind L-arginine.

Homodimer. Binds DNA as a dimer and an octamer. The octamer formed with lysine is stable in solution, but the octamer formed with arginine is unstable without DNA. When crystallized in the absence of DNA, dimers are assembled into helical cylinders with six dimers per turn. In solution, predominantly behaves as a dimer.

In the famine mode, FL11 forms dimers and acts as a repressor, leading to growth arrest. In the feast mode, in the presence of high concentrations of lysine or arginine, four dimers assemble into an octamer and cover the fl11 and lysine biosynthesis promoters. This leads to the inhibition of fl11 expression and lysine biosynthesis, decrease of the FL11 concentration in the cell, derepression of the target genes and activation of the metabolism. Its function is as follows. DNA-binding protein involved in the repression of transcription of a large number of genes, thereby arresting growth, in response to environmental changes. Binding sites are identified in promoters of approximately 200 transcription units, including genes involved in ATP synthesis, transmembrane transport, translation and DNA synthesis. The chain is HTH-type transcriptional regulator FL11 from Pyrococcus horikoshii (strain ATCC 700860 / DSM 12428 / JCM 9974 / NBRC 100139 / OT-3).